A 285-amino-acid chain; its full sequence is Bifunctional protein FolD (285 aa).

NADP(+) is bound by residues 165-167 and serine 190; that span reads GRS.

This sequence belongs to the tetrahydrofolate dehydrogenase/cyclohydrolase family. Homodimer.

The enzyme catalyses (6R)-5,10-methylene-5,6,7,8-tetrahydrofolate + NADP(+) = (6R)-5,10-methenyltetrahydrofolate + NADPH. It carries out the reaction (6R)-5,10-methenyltetrahydrofolate + H2O = (6R)-10-formyltetrahydrofolate + H(+). The protein operates within one-carbon metabolism; tetrahydrofolate interconversion. Functionally, catalyzes the oxidation of 5,10-methylenetetrahydrofolate to 5,10-methenyltetrahydrofolate and then the hydrolysis of 5,10-methenyltetrahydrofolate to 10-formyltetrahydrofolate. The polypeptide is Bifunctional protein FolD (Staphylococcus haemolyticus (strain JCSC1435)).